A 90-amino-acid chain; its full sequence is Actobindin-B/C (90 aa).

2 WH2 domains span residues 4 to 21 (TANP…LKHA) and 40 to 57 (DHSS…LKHV). The tract at residues 57–90 (VETQDRSAPVTEGATVKSNNHSALLGEIKSKAQE) is disordered.

As to quaternary structure, monomer.

Functionally, is able to bind two actin monomers at high concentrations of G-actin. Inhibits actin polymerization by sequestering G-actin and stabilizing actin dimers. This chain is Actobindin-B/C (abnB), found in Dictyostelium discoideum (Social amoeba).